The primary structure comprises 497 residues: Carboxypeptidase Y homolog ARB_02032 (497 aa).

The first 18 residues, 1–18 (MRFTQIVAAALCLGATEA), serve as a signal peptide directing secretion. An N-linked (GlcNAc...) asparagine glycan is attached at N88. S204 is a catalytic residue. N-linked (GlcNAc...) asparagine glycosylation is found at N263 and N393. Residue D403 is part of the active site. N-linked (GlcNAc...) asparagine glycosylation occurs at N417. The active site involves H469.

It belongs to the peptidase S10 family.

Its subcellular location is the secreted. It catalyses the reaction Release of a C-terminal amino acid with broad specificity.. In terms of biological role, involved in degradation of small peptides. This is Carboxypeptidase Y homolog ARB_02032 from Arthroderma benhamiae (strain ATCC MYA-4681 / CBS 112371) (Trichophyton mentagrophytes).